The primary structure comprises 333 residues: Glycerol-3-phosphate dehydrogenase [NAD(P)+] (333 aa).

Positions 15 and 108 each coordinate NADPH. Residues Lys-108, Gly-136, and Ser-138 each coordinate sn-glycerol 3-phosphate. Ala-140 is an NADPH binding site. Residues Lys-191, Asp-244, Ser-254, Arg-255, and Asn-256 each contribute to the sn-glycerol 3-phosphate site. Lys-191 serves as the catalytic Proton acceptor. Arg-255 provides a ligand contact to NADPH. NADPH-binding residues include Val-279 and Glu-281.

This sequence belongs to the NAD-dependent glycerol-3-phosphate dehydrogenase family.

It localises to the cytoplasm. It catalyses the reaction sn-glycerol 3-phosphate + NAD(+) = dihydroxyacetone phosphate + NADH + H(+). The enzyme catalyses sn-glycerol 3-phosphate + NADP(+) = dihydroxyacetone phosphate + NADPH + H(+). It participates in membrane lipid metabolism; glycerophospholipid metabolism. In terms of biological role, catalyzes the reduction of the glycolytic intermediate dihydroxyacetone phosphate (DHAP) to sn-glycerol 3-phosphate (G3P), the key precursor for phospholipid synthesis. The chain is Glycerol-3-phosphate dehydrogenase [NAD(P)+] from Maricaulis maris (strain MCS10) (Caulobacter maris).